Reading from the N-terminus, the 402-residue chain is CCA-adding enzyme (402 aa).

2 residues coordinate ATP: G32 and R35. Positions 32 and 35 each coordinate CTP. Mg(2+) contacts are provided by D45 and D47. Residues R116, D159, R162, R165, and R168 each contribute to the ATP site. CTP is bound by residues R116, D159, R162, R165, and R168.

The protein belongs to the tRNA nucleotidyltransferase/poly(A) polymerase family. Bacterial CCA-adding enzyme type 3 subfamily. In terms of assembly, homodimer. Requires Mg(2+) as cofactor.

The catalysed reaction is a tRNA precursor + 2 CTP + ATP = a tRNA with a 3' CCA end + 3 diphosphate. The enzyme catalyses a tRNA with a 3' CCA end + 2 CTP + ATP = a tRNA with a 3' CCACCA end + 3 diphosphate. Its function is as follows. Catalyzes the addition and repair of the essential 3'-terminal CCA sequence in tRNAs without using a nucleic acid template. Adds these three nucleotides in the order of C, C, and A to the tRNA nucleotide-73, using CTP and ATP as substrates and producing inorganic pyrophosphate. tRNA 3'-terminal CCA addition is required both for tRNA processing and repair. Also involved in tRNA surveillance by mediating tandem CCA addition to generate a CCACCA at the 3' terminus of unstable tRNAs. While stable tRNAs receive only 3'-terminal CCA, unstable tRNAs are marked with CCACCA and rapidly degraded. This is CCA-adding enzyme from Streptococcus agalactiae serotype III (strain NEM316).